Reading from the N-terminus, the 410-residue chain is Chorismate synthase (410 aa).

Residues arginine 43 and arginine 49 each contribute to the NADP(+) site. FMN contacts are provided by residues 143 to 145 (RSS), 264 to 265 (QA), glycine 308, 323 to 327 (KPIST), and arginine 349.

The protein belongs to the chorismate synthase family. As to quaternary structure, homotetramer. Requires FMNH2 as cofactor.

It carries out the reaction 5-O-(1-carboxyvinyl)-3-phosphoshikimate = chorismate + phosphate. Its pathway is metabolic intermediate biosynthesis; chorismate biosynthesis; chorismate from D-erythrose 4-phosphate and phosphoenolpyruvate: step 7/7. Functionally, catalyzes the anti-1,4-elimination of the C-3 phosphate and the C-6 proR hydrogen from 5-enolpyruvylshikimate-3-phosphate (EPSP) to yield chorismate, which is the branch point compound that serves as the starting substrate for the three terminal pathways of aromatic amino acid biosynthesis. This reaction introduces a second double bond into the aromatic ring system. The protein is Chorismate synthase of Corynebacterium glutamicum (strain ATCC 13032 / DSM 20300 / JCM 1318 / BCRC 11384 / CCUG 27702 / LMG 3730 / NBRC 12168 / NCIMB 10025 / NRRL B-2784 / 534).